We begin with the raw amino-acid sequence, 56 residues long: Large ribosomal subunit protein bL32 (56 aa).

The span at 1–16 (MAVQKSKKSRAARGMR) shows a compositional bias: basic residues. The segment at 1–22 (MAVQKSKKSRAARGMRRSHDAL) is disordered.

Belongs to the bacterial ribosomal protein bL32 family.

This chain is Large ribosomal subunit protein bL32, found in Photobacterium profundum (strain SS9).